The following is a 295-amino-acid chain: Protoheme IX farnesyltransferase (295 aa).

The next 9 membrane-spanning stretches (helical) occupy residues 30–50, 51–71, 93–115, 119–136, 148–168, 175–195, 219–239, 244–264, and 275–295; these read LVVLTGVTGIIIAPGNIHPLI, AVISTLCIALGSGAAGAINMW, ISRSSALEVGLVLSFISVTIMMI, YISGILLAISIGFYIYVY, IVIGGAAGALPPIIGWTSVTG, LVLFLIIFMWTPPHFWALSLL, IHILVYSILLFPITLLPGLFL, LYEITAIPLGLMFVVQAFQVF, and MFTYSIIYLFILFTCIMLSSF.

This sequence belongs to the UbiA prenyltransferase family. Protoheme IX farnesyltransferase subfamily.

The protein resides in the cell inner membrane. The enzyme catalyses heme b + (2E,6E)-farnesyl diphosphate + H2O = Fe(II)-heme o + diphosphate. Its pathway is porphyrin-containing compound metabolism; heme O biosynthesis; heme O from protoheme: step 1/1. Converts heme B (protoheme IX) to heme O by substitution of the vinyl group on carbon 2 of heme B porphyrin ring with a hydroxyethyl farnesyl side group. In Ehrlichia ruminantium (strain Gardel), this protein is Protoheme IX farnesyltransferase.